The sequence spans 218 residues: Ribose-5-phosphate isomerase A (218 aa).

Residues Thr-28–Thr-31, Asp-81–Asp-84, and Lys-94–Gly-97 each bind substrate. Catalysis depends on Glu-103, which acts as the Proton acceptor. A substrate-binding site is contributed by Lys-121.

This sequence belongs to the ribose 5-phosphate isomerase family. In terms of assembly, homodimer.

The enzyme catalyses aldehydo-D-ribose 5-phosphate = D-ribulose 5-phosphate. It functions in the pathway carbohydrate degradation; pentose phosphate pathway; D-ribose 5-phosphate from D-ribulose 5-phosphate (non-oxidative stage): step 1/1. Catalyzes the reversible conversion of ribose-5-phosphate to ribulose 5-phosphate. This is Ribose-5-phosphate isomerase A from Alcanivorax borkumensis (strain ATCC 700651 / DSM 11573 / NCIMB 13689 / SK2).